Here is a 91-residue protein sequence, read N- to C-terminus: Large ribosomal subunit protein eL34 (91 aa).

It belongs to the eukaryotic ribosomal protein eL34 family.

This chain is Large ribosomal subunit protein eL34, found in Thermofilum pendens (strain DSM 2475 / Hrk 5).